A 337-amino-acid chain; its full sequence is Ornithine carbamoyltransferase, catabolic (337 aa).

Residues 57–60 (STRT), Gln-84, Arg-108, and 135–138 (HPTQ) contribute to the carbamoyl phosphate site. Residues Asn-167, Asp-231, and 235 to 236 (SM) each bind L-ornithine. Residues 272–273 (CL) and Arg-317 contribute to the carbamoyl phosphate site.

It belongs to the aspartate/ornithine carbamoyltransferase superfamily. OTCase family.

The protein localises to the cytoplasm. It carries out the reaction carbamoyl phosphate + L-ornithine = L-citrulline + phosphate + H(+). It participates in amino-acid degradation; L-arginine degradation via ADI pathway; carbamoyl phosphate from L-arginine: step 2/2. Its function is as follows. Reversibly catalyzes the transfer of the carbamoyl group from carbamoyl phosphate (CP) to the N(epsilon) atom of ornithine (ORN) to produce L-citrulline. The polypeptide is Ornithine carbamoyltransferase, catabolic (arcB) (Streptococcus pyogenes serotype M1).